The chain runs to 572 residues: Light-independent protochlorophyllide reductase subunit N (572 aa).

Positions 106, 131, and 191 each coordinate [4Fe-4S] cluster. The disordered stretch occupies residues Ser-249–Asn-268.

This sequence belongs to the BchN/ChlN family. Protochlorophyllide reductase is composed of three subunits; ChlL, ChlN and ChlB. Forms a heterotetramer of two ChlB and two ChlN subunits. [4Fe-4S] cluster is required as a cofactor.

It localises to the plastid. Its subcellular location is the chloroplast. It carries out the reaction chlorophyllide a + oxidized 2[4Fe-4S]-[ferredoxin] + 2 ADP + 2 phosphate = protochlorophyllide a + reduced 2[4Fe-4S]-[ferredoxin] + 2 ATP + 2 H2O. Its pathway is porphyrin-containing compound metabolism; chlorophyll biosynthesis (light-independent). Component of the dark-operative protochlorophyllide reductase (DPOR) that uses Mg-ATP and reduced ferredoxin to reduce ring D of protochlorophyllide (Pchlide) to form chlorophyllide a (Chlide). This reaction is light-independent. The NB-protein (ChlN-ChlB) is the catalytic component of the complex. The protein is Light-independent protochlorophyllide reductase subunit N of Oltmannsiellopsis viridis (Marine flagellate).